Consider the following 958-residue polypeptide: Coiled-coil domain-containing protein 33 (958 aa).

The 140-residue stretch at 214–353 (SPEEPLIASQ…LVKPTESGKA (140 aa)) folds into the C2 domain. Polar residues predominate over residues 602–617 (SKDTVSSTMDLSTSTP). A disordered region spans residues 602–628 (SKDTVSSTMDLSTSTPREAEEEPLVPE). Coiled coils occupy residues 632-774 (DTEM…LEDR) and 859-899 (FNLL…RLQE). Residues 899–958 (EQEKGFRHPSNSIIIEQPSALTHSMDLKQPSELEPLLPSSDSKLNKPLSPQKETANSQQT) are disordered. Polar residues-rich tracts occupy residues 907–920 (PSNS…SALT) and 949–958 (QKETANSQQT).

This chain is Coiled-coil domain-containing protein 33 (CCDC33), found in Homo sapiens (Human).